The following is a 166-amino-acid chain: Interleukin-3 (166 aa).

A signal peptide spans 1 to 26 (MVLASSTTSIHTMLLLLLMLFHLGLQ). Residue N42 is glycosylated (N-linked (GlcNAc...) asparagine). 2 disulfide bridges follow: C43–C106 and C105–C166. Residue N112 is glycosylated (N-linked (GlcNAc...) asparagine; partial). The segment at 145–166 (LTSRPPQPASGSVSPNRGTVEC) is disordered.

It belongs to the IL-3 family. As to quaternary structure, monomer. Activated T-cells, mast cells, natural killer cells.

It is found in the secreted. Cytokine secreted predominantly by activated T-lymphocytes as well as mast cells and osteoblastic cells that controls the production and differentiation of hematopoietic progenitor cells into lineage-restricted cells. Also stimulates mature basophils, eosinophils, and monocytes to become functionally activated. In addition, plays an important role in neural cell proliferation and survival. Participates as well in bone homeostasis and inhibits osteoclast differentiation by preventing NF-kappa-B nuclear translocation and activation. Mechanistically, exerts its biological effects through a receptor composed of IL3RA subunit and a signal transducing subunit IL3RB. Receptor stimulation results in the rapid activation of JAK2 kinase activity leading to STAT5-mediated transcriptional program. Alternatively, contributes to cell survival under oxidative stress in non-hematopoietic systems by activating pathways mediated by PI3K/AKT and ERK. In Mus musculus (Mouse), this protein is Interleukin-3 (Il3).